The primary structure comprises 233 residues: 7-cyano-7-deazaguanine synthase (233 aa).

7-17 is an ATP binding site; sequence LSGGLDSAVTS. C195, C206, C209, and C212 together coordinate Zn(2+).

The protein belongs to the QueC family. The cofactor is Zn(2+).

It carries out the reaction 7-carboxy-7-deazaguanine + NH4(+) + ATP = 7-cyano-7-deazaguanine + ADP + phosphate + H2O + H(+). It participates in purine metabolism; 7-cyano-7-deazaguanine biosynthesis. In terms of biological role, catalyzes the ATP-dependent conversion of 7-carboxy-7-deazaguanine (CDG) to 7-cyano-7-deazaguanine (preQ(0)). The chain is 7-cyano-7-deazaguanine synthase from Methanococcus maripaludis (strain C5 / ATCC BAA-1333).